We begin with the raw amino-acid sequence, 385 residues long: Deoxyhypusine synthase (385 aa).

NAD(+) contacts are provided by residues 108–112 (SNLIS), 134–136 (TAG), glutamate 140, and aspartate 257. Position 139-140 (139-140 (EE)) interacts with spermidine. Residue aspartate 262 coordinates spermidine. Residue glycine 304 participates in NAD(+) binding. Histidine 309 contacts spermidine. NAD(+) is bound at residue 329-330 (TG). Spermidine-binding positions include 335 to 337 (GSD) and 344 to 350 (EAVSWGK). Residue lysine 350 is the Nucleophile of the active site. 363–364 (DV) contributes to the NAD(+) binding site.

It belongs to the deoxyhypusine synthase family. Requires NAD(+) as cofactor.

The catalysed reaction is [eIF5A protein]-L-lysine + spermidine = [eIF5A protein]-deoxyhypusine + propane-1,3-diamine. It participates in protein modification; eIF5A hypusination. In terms of biological role, catalyzes the NAD-dependent oxidative cleavage of spermidine and the subsequent transfer of the butylamine moiety of spermidine to the epsilon-amino group of a specific lysine residue of the eIF-5A precursor protein to form the intermediate deoxyhypusine residue. The polypeptide is Deoxyhypusine synthase (DYS1) (Candida glabrata (strain ATCC 2001 / BCRC 20586 / JCM 3761 / NBRC 0622 / NRRL Y-65 / CBS 138) (Yeast)).